Consider the following 341-residue polypeptide: MKALAKLKAAPGLEMTDVPLPEVGHNDLLIKIVKTAICGTDIHIWNWDEWSQKTIPVPMHVGHEYVGVVAGMGSEVQGFKIGQRVSGEGHITCGYCRNCRAGRRHLCRNTTGVGVNREGAFAEYLVIPAFNAFPIPDDISDDLASIFDPFGNAVHTALSFNLVGEDVLITGAGPIGIMAVAIAKHVGARHVVITDVNDYRLELAKKMGATRAVNVAREDLKAVMQELHMSEGFDVGLEMSGNPQAFRQMLETMNHGGKVALLGIPPSNTAIDWNQVIFKGLEIKGIYGREMFETWYKMVALIQSGLDISPIITHHFKVDEFEQGFAAMLSGQSGKVILDWR.

Cys-38 lines the Zn(2+) pocket. Active-site charge relay system residues include Thr-40 and His-43. The Zn(2+) site is built by His-63, Glu-64, Cys-93, Cys-96, Cys-99, and Cys-107. NAD(+) is bound by residues Ile-175, Asp-195, Arg-200, 262 to 264 (LGI), and 286 to 287 (IY).

The protein belongs to the zinc-containing alcohol dehydrogenase family. As to quaternary structure, homotetramer. It depends on Zn(2+) as a cofactor.

It localises to the cytoplasm. The enzyme catalyses L-threonine + NAD(+) = (2S)-2-amino-3-oxobutanoate + NADH + H(+). The protein operates within amino-acid degradation; L-threonine degradation via oxydo-reductase pathway; glycine from L-threonine: step 1/2. Functionally, catalyzes the NAD(+)-dependent oxidation of L-threonine to 2-amino-3-ketobutyrate. In Chromobacterium violaceum (strain ATCC 12472 / DSM 30191 / JCM 1249 / CCUG 213 / NBRC 12614 / NCIMB 9131 / NCTC 9757 / MK), this protein is L-threonine 3-dehydrogenase.